The following is a 191-amino-acid chain: Clusterin (191 aa).

Residues Asn-79, Asn-116, Asn-142, and Asn-162 are each glycosylated (N-linked (GlcNAc...) asparagine). At Ser-184 the chain carries Phosphoserine.

It belongs to the clusterin family. As to quaternary structure, antiparallel disulfide-linked heterodimer of an alpha chain and a beta chain. Self-associates and forms higher oligomers. Interacts with a broad range of misfolded proteins, including APP, APOC2 and LYZ. Slightly acidic pH promotes interaction with misfolded proteins. Forms high-molecular weight oligomers upon interaction with misfolded proteins. Interacts with APOA1, LRP2, CLUAP1 and PON1. Interacts with the complement membrane attack complex. Interacts (via alpha chain) with XRCC6. Interacts with SYVN1, COMMD1, BTRC, CUL1 and with ubiquitin and SCF (SKP1-CUL1-F-box protein) E3 ubiquitin-protein ligase complexes. Interacts (via alpha chain) with BAX in stressed cells, where BAX undergoes a conformation change leading to association with the mitochondrial membrane. Does not interact with BAX in unstressed cells. Found in a complex with LTF, CLU, EPPIN and SEMG1. Interacts (immaturely glycosylated pre-secreted form) with HSPA5; this interaction promotes CLU stability and facilitates stress-induced CLU retrotranslocation from the secretory pathway to the mitochondria, thereby reducing stress-induced apoptosis by stabilizing mitochondrial membrane integrity. Interacts with BCL2L1; this interaction releases and activates BAX and promotes cell death. Interacts with TGFBR2 and ACVR1. Interacts (secreted form) with STMN3; this interaction may act as an important modulator during neuronal differentiation. Proteolytically cleaved on its way through the secretory system, probably within the Golgi lumen. Proteolytic cleavage is not necessary for its chaperone activity. All non-secreted forms are not proteolytically cleaved. Chaperone activity of uncleaved forms is dependent on a non-reducing environment. Post-translationally, polyubiquitinated, leading to proteasomal degradation. Under cellular stress, the intracellular level of cleaved form is reduced due to proteasomal degradation. In terms of processing, heavily N-glycosylated. About 30% of the protein mass is comprised of complex N-linked carbohydrate. Endoplasmic reticulum (ER) stress induces changes in glycosylation status and increases level of hypoglycosylated forms. Core carbohydrates are essential for chaperone activity. Non-secreted forms are hypoglycosylated or unglycosylated.

The protein resides in the secreted. Its subcellular location is the nucleus. It is found in the cytoplasm. It localises to the mitochondrion membrane. The protein localises to the cytosol. The protein resides in the microsome. Its subcellular location is the endoplasmic reticulum. It is found in the mitochondrion. It localises to the perinuclear region. The protein localises to the cytoplasmic vesicle. The protein resides in the secretory vesicle. Its subcellular location is the chromaffin granule. Its function is as follows. Functions as extracellular chaperone that prevents aggregation of non native proteins. Prevents stress-induced aggregation of blood plasma proteins. Inhibits formation of amyloid fibrils by APP, APOC2, B2M, CALCA, CSN3, SNCA and aggregation-prone LYZ variants (in vitro). Does not require ATP. Maintains partially unfolded proteins in a state appropriate for subsequent refolding by other chaperones, such as HSPA8/HSC70. Does not refold proteins by itself. Binding to cell surface receptors triggers internalization of the chaperone-client complex and subsequent lysosomal or proteasomal degradation. When secreted, protects cells against apoptosis and against cytolysis by complement: inhibits assembly of the complement membrane attack complex (MAC) by preventing polymerization of C9 pore component of the MAC complex. Intracellular forms interact with ubiquitin and SCF (SKP1-CUL1-F-box protein) E3 ubiquitin-protein ligase complexes and promote the ubiquitination and subsequent proteasomal degradation of target proteins. Promotes proteasomal degradation of COMMD1 and IKBKB. Modulates NF-kappa-B transcriptional activity. Following stress, promotes apoptosis. Inhibits apoptosis when associated with the mitochondrial membrane by interference with BAX-dependent release of cytochrome c into the cytoplasm. Plays a role in the regulation of cell proliferation. An intracellular form suppresses stress-induced apoptosis by stabilizing mitochondrial membrane integrity through interaction with HSPA5. Secreted form does not affect caspase or BAX-mediated intrinsic apoptosis and TNF-induced NF-kappa-B-activity. Secreted form act as an important modulator during neuronal differentiation through interaction with STMN3. Plays a role in the clearance of immune complexes that arise during cell injury. This is Clusterin from Mesocricetus auratus (Golden hamster).